A 270-amino-acid chain; its full sequence is 4-hydroxy-tetrahydrodipicolinate reductase (270 aa).

Residues 11 to 16 and glutamate 37 contribute to the NAD(+) site; that span reads GAGGRM. Arginine 38 lines the NADP(+) pocket. NAD(+) is bound by residues 101-103 and 125-128; these read GTT and APNM. Catalysis depends on histidine 158, which acts as the Proton donor/acceptor. Histidine 159 contributes to the (S)-2,3,4,5-tetrahydrodipicolinate binding site. The Proton donor role is filled by lysine 162. 168-169 contributes to the (S)-2,3,4,5-tetrahydrodipicolinate binding site; sequence GT.

The protein belongs to the DapB family.

Its subcellular location is the cytoplasm. It catalyses the reaction (S)-2,3,4,5-tetrahydrodipicolinate + NAD(+) + H2O = (2S,4S)-4-hydroxy-2,3,4,5-tetrahydrodipicolinate + NADH + H(+). The catalysed reaction is (S)-2,3,4,5-tetrahydrodipicolinate + NADP(+) + H2O = (2S,4S)-4-hydroxy-2,3,4,5-tetrahydrodipicolinate + NADPH + H(+). The protein operates within amino-acid biosynthesis; L-lysine biosynthesis via DAP pathway; (S)-tetrahydrodipicolinate from L-aspartate: step 4/4. Its function is as follows. Catalyzes the conversion of 4-hydroxy-tetrahydrodipicolinate (HTPA) to tetrahydrodipicolinate. The chain is 4-hydroxy-tetrahydrodipicolinate reductase from Shewanella putrefaciens (strain CN-32 / ATCC BAA-453).